The chain runs to 571 residues: Ubiquitin-like-specific protease 1C (571 aa).

The segment at 221-260 (SESKDPKGDRRPNEAYGKGKPNESSPYLLVDDDDGDDDKV) is disordered. Positions 222-233 (ESKDPKGDRRPN) are enriched in basic and acidic residues. Active-site residues include His-426, Asp-449, and Cys-512.

The protein belongs to the peptidase C48 family.

The protein localises to the nucleus. It is found in the nucleoplasm. In terms of biological role, protease that catalyzes two essential functions in the SUMO pathway: processing of full-length SUMOs to their mature forms and deconjugation of SUMO from targeted proteins. Cleaves precursors of SUM1 and SUM2, but not of SUM3 or SUM5. Able to release SUM1 and SUM2 from conjugates, but unable to cleave SUM3. Protease activity mainly directed at deconjugating SUM1 and SUM2 from their target proteins. Regulates salt stress responses and flowering time. Redundant with ULP1D. This chain is Ubiquitin-like-specific protease 1C (ULP1C), found in Arabidopsis thaliana (Mouse-ear cress).